Here is a 481-residue protein sequence, read N- to C-terminus: OTU domain-containing protein 1 (481 aa).

Disordered regions lie at residues 18–60 and 202–282; these read PTAA…AAAE and LAAA…IVSR. Residues 38-58 are compositionally biased toward low complexity; sequence PPGAAGAAPEPETGECQPAAA. Residues 225–257 show a composition bias toward basic and acidic residues; it reads GEEHLAERGPRGWERGGDRCDAPGGDAARRPDP. A compositionally biased stretch (low complexity) spans 261 to 281; that stretch reads APPAGSIEAAPSSAAEPVIVS. The 130-residue stretch at 309-438 folds into the OTU domain; sequence KYRFHIIPDG…NGHYDAVFDH (130 aa). Residues 314-320 are cys-loop; it reads IIPDGNC. D317 is an active-site residue. The active-site Nucleophile is C320. Residues 369–379 are his-loop; that stretch reads AAQDGAWAGYP. The tract at residues 426-431 is variable-loop; sequence WLSNGH. Residue H431 is part of the active site. One can recognise a UIM domain in the interval 457–476; sequence KRDEELAKSMAISLSKMYIE.

The catalysed reaction is Thiol-dependent hydrolysis of ester, thioester, amide, peptide and isopeptide bonds formed by the C-terminal Gly of ubiquitin (a 76-residue protein attached to proteins as an intracellular targeting signal).. Deubiquitinating enzyme that specifically hydrolyzes 'Lys-63'-linked polyubiquitin to monoubiquitin. Required for the stability and translation of a subset mRNAs with a high abundance of rare codons by mediating deubiquitination of 40S ribosomal protein RPS10/eS10, thereby antagonizing ZNF598-mediated 40S ubiquitination. The abundance of rare codons in mRNAs can limit the translation rate and can lead to ribosome collisions that trigger activation of ribosome quality control (RQC) pathway by ZNF598. OTUD1-mediated deubiquitination prevents activation of the RQC and subsequent dissociation of ribosomes and stimulates formation of polysomes and translation. In Homo sapiens (Human), this protein is OTU domain-containing protein 1.